Here is a 237-residue protein sequence, read N- to C-terminus: Methylosome subunit pICln (237 aa).

At S2 the chain carries N-acetylserine. Phosphoserine is present on residues S102, S144, S193, S195, S198, and S210. The interval 135–159 (LHPDPEDEDSDDYDGEEYDVEAHEQ) is disordered. Over residues 139–153 (PEDEDSDDYDGEEYD) the composition is skewed to acidic residues. A Phosphothreonine modification is found at T223.

This sequence belongs to the pICln (TC 1.A.47) family. As to quaternary structure, component of the methylosome, a 20S complex containing at least PRMT5/SKB1, WDR77/MEP50 and CLNS1A/pICln. May mediate SNRPD1 and SNRPD3 methylation. Forms a 6S pICln-Sm complex composed of CLNS1A/pICln, SNRPD1, SNRPD2, SNRPE, SNRPF and SNRPG; ring-like structure where CLNS1A/pICln mimics additional Sm proteins and which is unable to assemble into the core snRNP. Interacts with LSM10 and LSM11.

It localises to the cytoplasm. The protein localises to the cytosol. It is found in the nucleus. The protein resides in the cytoskeleton. Functionally, involved in both the assembly of spliceosomal snRNPs and the methylation of Sm proteins. Chaperone that regulates the assembly of spliceosomal U1, U2, U4 and U5 small nuclear ribonucleoproteins (snRNPs), the building blocks of the spliceosome, and thereby plays an important role in the splicing of cellular pre-mRNAs. Most spliceosomal snRNPs contain a common set of Sm proteins SNRPB, SNRPD1, SNRPD2, SNRPD3, SNRPE, SNRPF and SNRPG that assemble in a heptameric protein ring on the Sm site of the small nuclear RNA to form the core snRNP (Sm core). In the cytosol, the Sm proteins SNRPD1, SNRPD2, SNRPE, SNRPF and SNRPG are trapped in an inactive 6S pICln-Sm complex by the chaperone CLNS1A that controls the assembly of the core snRNP. Dissociation by the SMN complex of CLNS1A from the trapped Sm proteins and their transfer to an SMN-Sm complex triggers the assembly of core snRNPs and their transport to the nucleus. The chain is Methylosome subunit pICln (CLNS1A) from Homo sapiens (Human).